The following is a 1337-amino-acid chain: uncharacterized protein (1337 aa).

Disordered stretches follow at residues Met1–Ala94 and Ala119–Phe174. Low complexity-rich tracts occupy residues Ser18–Ser37 and Ser68–Ser79. Polar residues predominate over residues Asn80–Ala94. Residues Pro123 to Ser147 show a composition bias toward low complexity. Over residues Asn157–Pro167 the composition is skewed to basic and acidic residues. A run of 6 helical transmembrane segments spans residues Gly209–Ala229, Phe241–Trp261, Phe267–Ala287, Val328–Ile348, Cys361–Phe381, and Leu387–Ile407. Disordered stretches follow at residues Ser623 to Ser662 and Tyr868 to His894. Positions Arg626–Lys644 are enriched in polar residues. Residues Tyr868–Met880 are compositionally biased toward basic and acidic residues. 6 helical membrane passes run Met917–Cys937, Ile975–His995, Leu997–Ile1017, Phe1021–Thr1041, Phe1066–Arg1086, and Phe1275–Ile1295.

The protein resides in the membrane. This is an uncharacterized protein from Schizosaccharomyces pombe (strain 972 / ATCC 24843) (Fission yeast).